A 947-amino-acid polypeptide reads, in one-letter code: Translation initiation factor IF-2 (947 aa).

A disordered region spans residues 55-361; the sequence is TKDAQAGSAK…PVTERKFHEL (307 aa). The span at 63–73 shows a compositional bias: basic and acidic residues; it reads AKDKQVAEQKA. Residues 76–90 are compositionally biased toward low complexity; sequence AKATTPQPAAATQEA. Basic and acidic residues-rich tracts occupy residues 103 to 116, 125 to 134, and 170 to 183; these read FKAE…EQAA, SNDRKSDYRQ, and NDGH…DKNR. Residues 190–204 show a composition bias toward low complexity; the sequence is RQQDTGRQGQTQAGA. Basic and acidic residues-rich tracts occupy residues 225-249, 257-267, and 294-311; these read ARQR…RQEA, QTEDKKHREAS, and NRPD…DGQK. The segment covering 316–334 has biased composition (low complexity); sequence SWNSQNQVRNQKNSNWNNN. Residues 335 to 345 show a composition bias toward basic residues; sequence KKNKKGKHHKN. Positions 448 to 617 constitute a tr-type G domain; it reads ERAPVVTIMG…LLVAEVEELK (170 aa). Residues 457–464 are G1; sequence GHVDHGKT. Residue 457 to 464 coordinates GTP; the sequence is GHVDHGKT. Residues 482 to 486 form a G2 region; that stretch reads GITQH. Residues 503-506 form a G3 region; it reads DTPG. Residues 503–507 and 557–560 contribute to the GTP site; these read DTPGH and NKID. Residues 557 to 560 form a G4 region; the sequence is NKID. Residues 593 to 595 are G5; it reads SAK.

This sequence belongs to the TRAFAC class translation factor GTPase superfamily. Classic translation factor GTPase family. IF-2 subfamily.

It is found in the cytoplasm. Functionally, one of the essential components for the initiation of protein synthesis. Protects formylmethionyl-tRNA from spontaneous hydrolysis and promotes its binding to the 30S ribosomal subunits. Also involved in the hydrolysis of GTP during the formation of the 70S ribosomal complex. In Streptococcus equi subsp. zooepidemicus (strain MGCS10565), this protein is Translation initiation factor IF-2.